The chain runs to 226 residues: Cytidylate kinase (226 aa).

G10–T18 is an ATP binding site.

It belongs to the cytidylate kinase family. Type 1 subfamily.

The protein resides in the cytoplasm. The enzyme catalyses CMP + ATP = CDP + ADP. It catalyses the reaction dCMP + ATP = dCDP + ADP. The sequence is that of Cytidylate kinase from Caldicellulosiruptor saccharolyticus (strain ATCC 43494 / DSM 8903 / Tp8T 6331).